The primary structure comprises 100 residues: Urease subunit gamma (100 aa).

It belongs to the urease gamma subunit family. In terms of assembly, heterotrimer of UreA (gamma), UreB (beta) and UreC (alpha) subunits. Three heterotrimers associate to form the active enzyme. Post-translationally, although not discussed in the published references, Met-1 is represented in the submitted PDB entries as being modified by either a formyl, a carboxyl, or an acetyl group. The N-terminal is probably N-(dihydroxymethyl)methionine, the hydrated form of N-formylmethionine.

It localises to the cytoplasm. It carries out the reaction urea + 2 H2O + H(+) = hydrogencarbonate + 2 NH4(+). It functions in the pathway nitrogen metabolism; urea degradation; CO(2) and NH(3) from urea (urease route): step 1/1. The chain is Urease subunit gamma from Sporosarcina pasteurii (Bacillus pasteurii).